We begin with the raw amino-acid sequence, 200 residues long: COMM domain-containing protein 7 (200 aa).

The 68-residue stretch at 133-200 (QLIDMEWKFG…RVRTSMECFC (68 aa)) folds into the COMM domain.

The protein belongs to the COMM domain-containing protein 7 family. Component of the commander complex consisting of the CCC subcomplex and the retriever subcomplex. Component of the CCC (COMMD/CCDC22/CCDC93) subcomplex consisting of COMMD1, COMMD2, COMMD3, COMMD4, COMMD5, COMMD6, COMMD7, COMMD8, COMMD9, COMMD10, CCDC22 and CCDC93; within the complex forms a heterodimer with COMMD9. Interacts with RELA. Interacts with CCDC22, CCDC93, SCNN1B, CUL7. As to expression, widely expressed with highest expression in lung.

The protein localises to the cytoplasmic vesicle. In terms of biological role, scaffold protein in the commander complex that is essential for endosomal recycling of transmembrane cargos; the commander complex is composed of the CCC subcomplex and the retriever subcomplex. May modulate activity of cullin-RING E3 ubiquitin ligase (CRL) complexes. Associates with the NF-kappa-B complex and suppresses its transcriptional activity. In Homo sapiens (Human), this protein is COMM domain-containing protein 7 (COMMD7).